A 278-amino-acid chain; its full sequence is Biotin synthase (278 aa).

Positions 1-227 (MQIMLCAISN…QSVVMVAGGR (227 aa)) constitute a Radical SAM core domain. Residues Cys16, Cys20, and Cys23 each contribute to the [4Fe-4S] cluster site. Residues Cys60, Asn96, and Cys154 each contribute to the [2Fe-2S] cluster site.

This sequence belongs to the radical SAM superfamily. Biotin synthase family. As to quaternary structure, homodimer. It depends on [4Fe-4S] cluster as a cofactor. [2Fe-2S] cluster serves as cofactor.

The enzyme catalyses (4R,5S)-dethiobiotin + (sulfur carrier)-SH + 2 reduced [2Fe-2S]-[ferredoxin] + 2 S-adenosyl-L-methionine = (sulfur carrier)-H + biotin + 2 5'-deoxyadenosine + 2 L-methionine + 2 oxidized [2Fe-2S]-[ferredoxin]. It functions in the pathway cofactor biosynthesis; biotin biosynthesis; biotin from 7,8-diaminononanoate: step 2/2. Functionally, catalyzes the conversion of dethiobiotin (DTB) to biotin by the insertion of a sulfur atom into dethiobiotin via a radical-based mechanism. This chain is Biotin synthase, found in Campylobacter jejuni subsp. jejuni serotype O:2 (strain ATCC 700819 / NCTC 11168).